The following is a 694-amino-acid chain: Probable metal-nicotianamine transporter YSL8 (694 aa).

A run of 14 helical transmembrane segments spans residues 38 to 58 (ITVR…FIVM), 62 to 82 (LTSG…FFLM), 110 to 130 (CVIS…ILGM), 154 to 174 (LGRL…SIVP), 215 to 235 (ILFK…FYAA), 265 to 285 (VGVG…GSVV), 319 to 339 (VFIS…SIVL), 393 to 413 (IAAA…PHIF), 421 to 441 (VVWA…GTGL), 467 to 487 (GGVV…STAS), 506 to 526 (MFVS…MVFW), 567 to 587 (LRFC…KEVA), 608 to 628 (FFLG…LFLW), and 643 to 663 (VASG…ILSL).

It belongs to the YSL (TC 2.A.67.2) family. As to expression, expressed in root epidermis and exoderm.

The protein localises to the membrane. Functionally, may be involved in the transport of nicotianamine-chelated metals. The sequence is that of Probable metal-nicotianamine transporter YSL8 (YSL8) from Oryza sativa subsp. japonica (Rice).